A 641-amino-acid chain; its full sequence is Anthrax toxin receptor-like (641 aa).

A signal peptide spans 1-27; sequence MMSHSPSMPCSALFLLLLLLLPPTFKG. Residues 28–363 lie on the Extracellular side of the membrane; that stretch reads GSLRYHGPGW…ASQGIVFKRT (336 aa). The region spanning 76 to 247 is the VWFA domain; it reads DLYLVLDKSG…SALEGVVDPL (172 aa). 3 residues coordinate a divalent metal cation: Ser84, Ser86, and Thr150. A helical membrane pass occupies residues 364-384; sequence WLMFLPVLLVTLLLLCCTWKL. Residues 385 to 641 lie on the Cytoplasmic side of the membrane; that stretch reads CIKPKKLPPP…FPPISKGPKF (257 aa). Residues 391-455 are disordered; the sequence is LPPPPPKPEK…ARPPPAPLPA (65 aa). Residues 407–436 show a composition bias toward pro residues; that stretch reads PPPSSPPAPGRGPGPGPSAGPGPGPGPSPG.

This sequence belongs to the ATR family.

The protein resides in the membrane. The protein is Anthrax toxin receptor-like (Antxrl) of Mus musculus (Mouse).